Consider the following 586-residue polypeptide: Thioredoxin domain-containing protein 3 (586 aa).

One can recognise a Thioredoxin domain in the interval L10–E116. C39 and C42 are oxidised to a cystine. NDK stretches follow at residues M157–E254, V312–A452, and L453–N586.

The protein in the C-terminal section; belongs to the NDK family. In terms of assembly, monomer. As to expression, testis-specific. Expressed mainly in round spermatids.

The protein resides in the cytoplasm. Probably required during the final stages of sperm tail maturation in the testis and/or epididymis, where extensive disulfide bonding of fibrous sheath (FS) proteins occurs. In vitro, it has neither nucleoside diphosphate kinase (NDPK) activity nor reducing activity on disulfide bonds. Exhibits a 3'-5' exonuclease activity with a preference for single-stranded DNA, suggesting roles in DNA proofreading and repair. This chain is Thioredoxin domain-containing protein 3 (Nme8), found in Mus musculus (Mouse).